Reading from the N-terminus, the 150-residue chain is Flagellar assembly factor FliW (150 aa).

This sequence belongs to the FliW family. In terms of assembly, interacts with translational regulator CsrA and flagellin(s).

The protein localises to the cytoplasm. Its function is as follows. Acts as an anti-CsrA protein, binds CsrA and prevents it from repressing translation of its target genes, one of which is flagellin. Binds to flagellin and participates in the assembly of the flagellum. In Leptospira interrogans serogroup Icterohaemorrhagiae serovar Lai (strain 56601), this protein is Flagellar assembly factor FliW.